A 435-amino-acid chain; its full sequence is Putative BTB/POZ domain-containing protein L275 (435 aa).

In terms of domain architecture, BTB spans 80-149 (YDGYVYINVG…IKGKQNDNHN (70 aa)).

It belongs to the mimivirus BTB/WD family.

This is Putative BTB/POZ domain-containing protein L275 from Acanthamoeba polyphaga mimivirus (APMV).